The sequence spans 390 residues: 5-hydroxytryptamine receptor 1B (390 aa).

Residues 1 to 46 (MEEPGAQCAPPXPAGSETWVPQANLSSAPSQNCSAKDYIYQDSIAL) are Extracellular-facing. N-linked (GlcNAc...) asparagine glycans are attached at residues N24 and N32. The chain crosses the membrane as a helical span at residues 47–72 (PWKVLLVMLLALITLATTLSNAFVIA). Residues 73 to 86 (TVYRTRKLHTPANY) lie on the Cytoplasmic side of the membrane. Residues 87-111 (LIASLAVTDLLVSILVMPISTMYTV) form a helical membrane-spanning segment. Residues 112–119 (TGRWTLGQ) lie on the Extracellular side of the membrane. Residues 120–145 (VVCDFWLSSDITCCTASILHLCVIAL) traverse the membrane as a helical segment. C122 and C199 are joined by a disulfide. Ergotamine is bound by residues D129 and T134. The DRY motif; important for ligand-induced conformation changes and signaling signature appears at 146 to 148 (DRY). The Cytoplasmic segment spans residues 146 to 165 (DRYWAITDAVEYSAKRTPKR). Residues 166 to 184 (AAVMIALVWVFSISISLPP) form a helical membrane-spanning segment. Topologically, residues 185–205 (FFWRQAKAEEEVSECVVNTDH) are extracellular. Ergotamine is bound at residue V201. A helical membrane pass occupies residues 206 to 229 (ILYTVYSTVGAFYFPTLLLIALYG). Residues 230-315 (RIYVEARSRI…AARERKATKT (86 aa)) are Cytoplasmic-facing. A compositionally biased stretch (polar residues) spans 259-272 (DSPGSTSSVTSINS). Positions 259–281 (DSPGSTSSVTSINSRVPDVPSES) are disordered. The helical transmembrane segment at 316-337 (LGIILGAFIVCWLPFFIISLVM) threads the bilayer. The Extracellular segment spans residues 338-347 (PICKDACWFH). The chain crosses the membrane as a helical span at residues 348–370 (LAIFDFFTWLGYLNSLINPIIYT). An NPxxY motif; important for ligand-induced conformation changes and signaling motif is present at residues 365–369 (NPIIY). The Cytoplasmic portion of the chain corresponds to 371 to 390 (MSNEDFKQAFHKLIRFKCTS). C388 is lipidated: S-palmitoyl cysteine.

It belongs to the G-protein coupled receptor 1 family. Homodimer. Heterodimer with HTR1D. Phosphorylated. Desensitization of the receptor may be mediated by its phosphorylation. In terms of processing, palmitoylated.

The protein localises to the cell membrane. Its function is as follows. G-protein coupled receptor for 5-hydroxytryptamine (serotonin). Also functions as a receptor for ergot alkaloid derivatives, various anxiolytic and antidepressant drugs and other psychoactive substances, such as lysergic acid diethylamide (LSD). Ligand binding causes a conformation change that triggers signaling via guanine nucleotide-binding proteins (G proteins) and modulates the activity of downstream effectors, such as adenylate cyclase. HTR1B is coupled to G(i)/G(o) G alpha proteins and mediates inhibitory neurotransmission by inhibiting adenylate cyclase activity. Arrestin family members inhibit signaling via G proteins and mediate activation of alternative signaling pathways. Regulates the release of 5-hydroxytryptamine, dopamine and acetylcholine in the brain, and thereby affects neural activity, nociceptive processing, pain perception, mood and behavior. Besides, plays a role in vasoconstriction of cerebral arteries. This chain is 5-hydroxytryptamine receptor 1B (HTR1B), found in Gorilla gorilla gorilla (Western lowland gorilla).